Reading from the N-terminus, the 1276-residue chain is Component of gems protein 5 (1276 aa).

The segment at 53–55 (NWY) is interaction with U4 snRNA. WD repeat units lie at residues 92–139 (GHTD…DDHN), 183–223 (EHKA…VFPI), 228–268 (GNNI…TVCK), 271–336 (AHSA…IESG), 364–405 (NDKQ…SPPE), 438–481 (TTKN…IKIQ), 485–522 (GFVYSIDTCSYSPNTFAIGCGDNTIRLWSPTENSKDAY), and 530–574 (GIQS…SKIF). Positions 138-157 (HNEDTEIGDDFKHGSGGGGS) are disordered. The disordered stretch occupies residues 586–652 (IWKPPPTPTP…NSNNEQQPNK (67 aa)). Positions 598 to 646 (NINNNNNNNNNNNNNNNNNNNNNNNNNNNNNNNNNNNNINNNNNNNSNN) are enriched in low complexity. WD repeat units follow at residues 688–727 (TFSKHKTDINFNLNGDMISIGYSDGTIDIFTSEFLFLTRI) and 729–771 (EHKK…NQNE). The segment covering 772-793 (NEKKIDNEKGKENENEKGKENE) has biased composition (basic and acidic residues). Residues 772-809 (NEKKIDNEKGKENENEKGKENENENENENENENENENE) form a disordered region. Positions 778–829 (NEKGKENENEKGKENENENENENENENENENENEIENIVNNNNENDTEIEIK) form a coiled coil. Residues 794 to 809 (NENENENENENENENE) show a composition bias toward acidic residues. WD repeat units follow at residues 863–903 (GHKN…AISN) and 906–946 (GHDG…FKTV). A disordered region spans residues 967–997 (ITEQQQQQQQPQSPIKSNPDQSNNPSLVPPI). Residues 979–992 (SPIKSNPDQSNNPS) show a composition bias toward polar residues.

The protein belongs to the WD repeat gemin-5 family. Part of the core SMN complex.

It localises to the nucleus. The protein localises to the nucleoplasm. The protein resides in the gem. It is found in the cytoplasm. In terms of biological role, the SMN complex catalyzes the assembly of small nuclear ribonucleoproteins (snRNPs), the building blocks of the spliceosome, and thereby plays an important role in the splicing of cellular pre-mRNAs. Most spliceosomal snRNPs contain a common set of Sm proteins SNRPB, SNRPD1, SNRPD2, SNRPD3, SNRPE, SNRPF and SNRPG that assemble in a heptameric protein ring on the Sm site of the small nuclear RNA to form the core snRNP (Sm core). In the cytosol, the Sm proteins SNRPD1, SNRPD2, SNRPE, SNRPF and SNRPG are trapped in an inactive 6S pICln-Sm complex by the chaperone CLNS1A that controls the assembly of the core snRNP. To assemble core snRNPs, the SMN complex accepts the trapped 5Sm proteins from CLNS1A forming an intermediate. Binding of snRNA inside 5Sm ultimately triggers eviction of the SMN complex, thereby allowing binding of SNRPD3 and SNRPB to complete assembly of the core snRNP. Within the SMN complex, GEMIN5 recognizes and delivers the small nuclear RNAs (snRNAs) to the SMN complex. Binds to the 7-methylguanosine cap of RNA molecules. This is Component of gems protein 5 (gemin5) from Dictyostelium discoideum (Social amoeba).